A 255-amino-acid polypeptide reads, in one-letter code: Adenylate dimethylallyltransferase (255 aa).

Belongs to the isopentenyl transferase family.

The catalysed reaction is dimethylallyl diphosphate + AMP = N(6)-(dimethylallyl)adenosine 5'-phosphate + diphosphate. Transfers dimethylallyl groups to AMP as part of the biosynthesis of cytokinin phytohormones. The protein is Adenylate dimethylallyltransferase (fas4) of Rhodococcoides fascians (Rhodococcus fascians).